The sequence spans 180 residues: Type IV major pilin protein PilE1 (180 aa).

A propeptide spanning residues 1 to 7 (MNTLQKG) is cleaved from the precursor. Phe-8 is modified (N-methylphenylalanine). A helical membrane pass occupies residues 8–28 (FTLIELMIVIAIVGILAAVAL). Ser-70 is a glycosylation site (O-linked (GlcNAc...) serine). The cysteines at positions 128 and 160 are disulfide-linked.

The protein belongs to the N-Me-Phe pilin family. The pili are polar flexible filaments of about 5.4 nanometers diameter and 2.5 micrometers average length; they consist of only a single polypeptide chain arranged in a helical configuration of five subunits per turn in the assembled pilus.

The protein localises to the fimbrium. It localises to the membrane. Major component of the type IV pilus (T4P) that plays a role in cellular adherence, microcolony formation, resistance to neutrophil mediated killing, twitching motility as well as transformation. Mediates the attachment and the formation of bacterial microcolonies on host epithelial cells. Mechanistically, pili retractation induces host NF-kappa-B activation in infected cells, which is temporally associated with the formation of gonococcal microcolonies. This Neisseria gonorrhoeae protein is Type IV major pilin protein PilE1 (pilE1).